A 295-amino-acid chain; its full sequence is Ribosomal protein L11 methyltransferase (295 aa).

4 residues coordinate S-adenosyl-L-methionine: Thr145, Gly166, Asp188, and Asn230.

This sequence belongs to the methyltransferase superfamily. PrmA family.

Its subcellular location is the cytoplasm. The enzyme catalyses L-lysyl-[protein] + 3 S-adenosyl-L-methionine = N(6),N(6),N(6)-trimethyl-L-lysyl-[protein] + 3 S-adenosyl-L-homocysteine + 3 H(+). In terms of biological role, methylates ribosomal protein L11. This chain is Ribosomal protein L11 methyltransferase, found in Pectobacterium carotovorum subsp. carotovorum (strain PC1).